Here is a 127-residue protein sequence, read N- to C-terminus: Fatty acid-binding protein, liver (127 aa).

Position 1 is an N-acetylmethionine (Met-1). Residue Ser-11 is modified to Phosphoserine. N6-succinyllysine is present on residues Lys-31 and Lys-36. Position 39 is a phosphoserine (Ser-39). N6-succinyllysine is present on Lys-46. Phosphothreonine is present on Thr-51. 2 positions are modified to N6-succinyllysine: Lys-57 and Lys-78. Lys-84 is subject to N6-acetyllysine; alternate. The residue at position 84 (Lys-84) is an N6-succinyllysine; alternate. The residue at position 90 (Lys-90) is an N6-succinyllysine. The residue at position 100 (Ser-100) is a Phosphoserine. The residue at position 121 (Lys-121) is an N6-succinyllysine.

The protein belongs to the calycin superfamily. Fatty-acid binding protein (FABP) family.

The protein localises to the cytoplasm. Functionally, plays a role in lipoprotein-mediated cholesterol uptake in hepatocytes. Binds cholesterol. Binds free fatty acids and their coenzyme A derivatives, bilirubin, and some other small molecules in the cytoplasm. May be involved in intracellular lipid transport. In Mus musculus (Mouse), this protein is Fatty acid-binding protein, liver (Fabp1).